The primary structure comprises 419 residues: Glutamyl-tRNA reductase (419 aa).

Residues 50 to 53 (TCNR), Ser108, 113 to 115 (ETQ), and Gln119 each bind substrate. Cys51 (nucleophile) is an active-site residue. Position 188–193 (188–193 (GAGEMI)) interacts with NADP(+).

It belongs to the glutamyl-tRNA reductase family. In terms of assembly, homodimer.

It catalyses the reaction (S)-4-amino-5-oxopentanoate + tRNA(Glu) + NADP(+) = L-glutamyl-tRNA(Glu) + NADPH + H(+). It participates in porphyrin-containing compound metabolism; protoporphyrin-IX biosynthesis; 5-aminolevulinate from L-glutamyl-tRNA(Glu): step 1/2. In terms of biological role, catalyzes the NADPH-dependent reduction of glutamyl-tRNA(Glu) to glutamate 1-semialdehyde (GSA). The protein is Glutamyl-tRNA reductase of Albidiferax ferrireducens (strain ATCC BAA-621 / DSM 15236 / T118) (Rhodoferax ferrireducens).